The chain runs to 334 residues: Holliday junction branch migration complex subunit RuvB (334 aa).

The large ATPase domain (RuvB-L) stretch occupies residues 1–179; it reads MTHKISVLHQ…FAFTGRVDYY (179 aa). Residues Leu18, Arg19, Gly60, Lys63, Thr64, Ser65, 126–128, Arg169, Tyr179, and Arg216 each bind ATP; that span reads EDF. Residue Thr64 participates in Mg(2+) binding. A small ATPAse domain (RuvB-S) region spans residues 180 to 250; the sequence is TDEDLVSILS…VAEKALAMLL (71 aa). Residues 253–334 form a head domain (RuvB-H) region; it reads NLGLNEIDIK…RNPKDRWGEE (82 aa). 2 residues coordinate DNA: Arg308 and Arg313.

Belongs to the RuvB family. In terms of assembly, homohexamer. Forms an RuvA(8)-RuvB(12)-Holliday junction (HJ) complex. HJ DNA is sandwiched between 2 RuvA tetramers; dsDNA enters through RuvA and exits via RuvB. An RuvB hexamer assembles on each DNA strand where it exits the tetramer. Each RuvB hexamer is contacted by two RuvA subunits (via domain III) on 2 adjacent RuvB subunits; this complex drives branch migration. In the full resolvosome a probable DNA-RuvA(4)-RuvB(12)-RuvC(2) complex forms which resolves the HJ.

The protein localises to the cytoplasm. It carries out the reaction ATP + H2O = ADP + phosphate + H(+). Functionally, the RuvA-RuvB-RuvC complex processes Holliday junction (HJ) DNA during genetic recombination and DNA repair, while the RuvA-RuvB complex plays an important role in the rescue of blocked DNA replication forks via replication fork reversal (RFR). RuvA specifically binds to HJ cruciform DNA, conferring on it an open structure. The RuvB hexamer acts as an ATP-dependent pump, pulling dsDNA into and through the RuvAB complex. RuvB forms 2 homohexamers on either side of HJ DNA bound by 1 or 2 RuvA tetramers; 4 subunits per hexamer contact DNA at a time. Coordinated motions by a converter formed by DNA-disengaged RuvB subunits stimulates ATP hydrolysis and nucleotide exchange. Immobilization of the converter enables RuvB to convert the ATP-contained energy into a lever motion, pulling 2 nucleotides of DNA out of the RuvA tetramer per ATP hydrolyzed, thus driving DNA branch migration. The RuvB motors rotate together with the DNA substrate, which together with the progressing nucleotide cycle form the mechanistic basis for DNA recombination by continuous HJ branch migration. Branch migration allows RuvC to scan DNA until it finds its consensus sequence, where it cleaves and resolves cruciform DNA. This is Holliday junction branch migration complex subunit RuvB from Chlamydia trachomatis serovar A (strain ATCC VR-571B / DSM 19440 / HAR-13).